A 466-amino-acid chain; its full sequence is Glutamate decarboxylase (466 aa).

Position 277 is an N6-(pyridoxal phosphate)lysine (lysine 277).

The protein belongs to the group II decarboxylase family. Pyridoxal 5'-phosphate serves as cofactor.

It carries out the reaction L-glutamate + H(+) = 4-aminobutanoate + CO2. Converts internalized glutamate to GABA and increases the internal pH. Involved in glutamate-dependent acid resistance. The sequence is that of Glutamate decarboxylase (gadB) from Lactococcus lactis subsp. lactis (strain IL1403) (Streptococcus lactis).